The following is a 234-amino-acid chain: Geranylgeranylglyceryl phosphate synthase (234 aa).

Residues Asp24 and Ser52 each contribute to the Mg(2+) site. Sn-glycerol 1-phosphate is bound by residues 172-178, 203-204, and 225-226; these read YLEAGSG, GG, and GT.

This sequence belongs to the GGGP/HepGP synthase family. Group II subfamily. In terms of assembly, homodimer. The cofactor is Mg(2+).

It carries out the reaction sn-glycerol 1-phosphate + (2E,6E,10E)-geranylgeranyl diphosphate = sn-3-O-(geranylgeranyl)glycerol 1-phosphate + diphosphate. In terms of biological role, prenyltransferase that catalyzes the transfer of the geranylgeranyl moiety of geranylgeranyl diphosphate (GGPP) to the C3 hydroxyl of sn-glycerol-1-phosphate (G1P). In Zunongwangia profunda (strain DSM 18752 / CCTCC AB 206139 / SM-A87) (Wangia profunda), this protein is Geranylgeranylglyceryl phosphate synthase.